A 281-amino-acid polypeptide reads, in one-letter code: NAD kinase (281 aa).

The Proton acceptor role is filled by D61. Residues 61 to 62 (DG), 134 to 135 (ND), R145, D164, 175 to 180 (TAYSLS), and Q234 contribute to the NAD(+) site.

Belongs to the NAD kinase family. Requires a divalent metal cation as cofactor.

It localises to the cytoplasm. The catalysed reaction is NAD(+) + ATP = ADP + NADP(+) + H(+). Involved in the regulation of the intracellular balance of NAD and NADP, and is a key enzyme in the biosynthesis of NADP. Catalyzes specifically the phosphorylation on 2'-hydroxyl of the adenosine moiety of NAD to yield NADP. This Clostridium botulinum (strain Kyoto / Type A2) protein is NAD kinase.